The following is a 618-amino-acid chain: Serine/threonine-protein kinase TNNI3K (618 aa).

Residue Gly2 is the site of N-myristoyl glycine attachment. Positions 21–51 form a coiled coil; that stretch reads SESYVITIERLEDDLKIKEKELTELRNIFGS. ANK repeat units lie at residues 66-96, 100-129, 133-162, 166-195, 199-228, 234-263, 269-298, 304-335, 339-368, and 381-410; these read NGLS…RPSR, NGFT…DIQQ, GGLT…NVNI, VFFT…DVNV, VGDR…KADV, EDHV…EVQP, YGDT…TESL, FSET…NINH, DGHT…DMNL, and DEQT…PQDE. The region spanning 463–618 is the Protein kinase domain; that stretch reads IEFHEIIGSG…TAHTIYLLAP (156 aa). ATP contacts are provided by residues 469 to 477 and Lys490; that span reads IGSGSFGKV. Asp588 functions as the Proton acceptor in the catalytic mechanism.

It belongs to the protein kinase superfamily. TKL Ser/Thr protein kinase family. MAP kinase kinase kinase subfamily. Interacts with TNNI3, ACTC, ACTA1, MYBPC3, AIP, FABP3 and HADHB. Mg(2+) is required as a cofactor. Autophosphorylated.

Its subcellular location is the nucleus. It localises to the cytoplasm. It catalyses the reaction L-seryl-[protein] + ATP = O-phospho-L-seryl-[protein] + ADP + H(+). The catalysed reaction is L-threonyl-[protein] + ATP = O-phospho-L-threonyl-[protein] + ADP + H(+). May play a role in cardiac physiology. This is Serine/threonine-protein kinase TNNI3K from Pongo abelii (Sumatran orangutan).